The chain runs to 628 residues: Carbon monoxide dehydrogenase 1 (628 aa).

Positions 44, 52, 53, 56, 61, and 75 each coordinate [4Fe-4S] cluster. [Ni-4Fe-5S] cluster contacts are provided by His266, Cys302, Cys340, Cys448, Cys478, and Cys519.

This sequence belongs to the Ni-containing carbon monoxide dehydrogenase family. Homodimer. Requires [4Fe-4S] cluster as cofactor. The cofactor is [Ni-4Fe-5S] cluster.

It catalyses the reaction CO + 2 oxidized [2Fe-2S]-[ferredoxin] + H2O = 2 reduced [2Fe-2S]-[ferredoxin] + CO2 + 2 H(+). Its function is as follows. CODH oxidizes carbon monoxide coupled, via CooF, to the reduction of a hydrogen cation by a hydrogenase (possibly CooH). In Methanosarcina acetivorans (strain ATCC 35395 / DSM 2834 / JCM 12185 / C2A), this protein is Carbon monoxide dehydrogenase 1 (cooS1).